The sequence spans 596 residues: Aspartate--tRNA(Asp/Asn) ligase (596 aa).

Glu-172 serves as a coordination point for L-aspartate. Residues 196 to 199 (QLFK) form an aspartate region. Arg-218 is an L-aspartate binding site. Residues 218-220 (RDE) and Gln-227 each bind ATP. His-455 contributes to the L-aspartate binding site. Position 489 (Glu-489) interacts with ATP. Residue Arg-496 coordinates L-aspartate. Residue 541–544 (GLDR) coordinates ATP.

It belongs to the class-II aminoacyl-tRNA synthetase family. Type 1 subfamily. As to quaternary structure, homodimer.

The protein resides in the cytoplasm. The catalysed reaction is tRNA(Asx) + L-aspartate + ATP = L-aspartyl-tRNA(Asx) + AMP + diphosphate. Its function is as follows. Aspartyl-tRNA synthetase with relaxed tRNA specificity since it is able to aspartylate not only its cognate tRNA(Asp) but also tRNA(Asn). Reaction proceeds in two steps: L-aspartate is first activated by ATP to form Asp-AMP and then transferred to the acceptor end of tRNA(Asp/Asn). This is Aspartate--tRNA(Asp/Asn) ligase from Bordetella bronchiseptica (strain ATCC BAA-588 / NCTC 13252 / RB50) (Alcaligenes bronchisepticus).